The following is a 184-amino-acid chain: uncharacterized protein (184 aa).

Residues 1–20 (MYQLEKIWVLLCLALVGVLG) form the signal peptide.

This is an uncharacterized protein from Drosophila melanogaster (Fruit fly).